The chain runs to 264 residues: uncharacterized protein (264 aa).

Residues 1–21 form the signal peptide; the sequence is MMWNYFVTCIVLYANIISIHT. Residues 182–247 form a disordered region; it reads QQPNAAQVPT…AANNGLDLTS (66 aa). Over residues 190-213 the composition is skewed to low complexity; sequence PTTSQQQPTSNTGGQQPPTNASNP. The N-linked (GlcNAc...) asparagine glycan is linked to asparagine 209. The span at 214–226 shows a compositional bias: pro residues; that stretch reads PTNPQPTPTPAQP. Over residues 230–247 the composition is skewed to polar residues; sequence GTQVQQTPAANNGLDLTS.

Component of the acid-insoluble and acid-soluble organic matrix of calcified layers of the shell (at protein level).

Its subcellular location is the secreted. This is an uncharacterized protein from Lottia gigantea (Giant owl limpet).